The sequence spans 188 residues: Ribosomal RNA small subunit methyltransferase G (188 aa).

S-adenosyl-L-methionine is bound by residues glycine 69, phenylalanine 74, 119–120, and arginine 134; that span reads VQ.

The protein belongs to the methyltransferase superfamily. RNA methyltransferase RsmG family.

Its subcellular location is the cytoplasm. It catalyses the reaction guanosine(527) in 16S rRNA + S-adenosyl-L-methionine = N(7)-methylguanosine(527) in 16S rRNA + S-adenosyl-L-homocysteine. Its function is as follows. Specifically methylates the N7 position of guanine in position 527 of 16S rRNA. The chain is Ribosomal RNA small subunit methyltransferase G from Campylobacter jejuni subsp. jejuni serotype O:2 (strain ATCC 700819 / NCTC 11168).